Here is a 118-residue protein sequence, read N- to C-terminus: Holo-[acyl-carrier-protein] synthase (118 aa).

Mg(2+) contacts are provided by Asp5 and Glu51.

It belongs to the P-Pant transferase superfamily. AcpS family. It depends on Mg(2+) as a cofactor.

Its subcellular location is the cytoplasm. The enzyme catalyses apo-[ACP] + CoA = holo-[ACP] + adenosine 3',5'-bisphosphate + H(+). Its function is as follows. Transfers the 4'-phosphopantetheine moiety from coenzyme A to a Ser of acyl-carrier-protein. This chain is Holo-[acyl-carrier-protein] synthase, found in Helicobacter pylori (strain P12).